We begin with the raw amino-acid sequence, 62 residues long: DNA-directed RNA polymerase subunit Rpo10 (62 aa).

Residues Cys-6, Cys-9, Cys-43, and Cys-44 each coordinate Zn(2+).

This sequence belongs to the archaeal Rpo10/eukaryotic RPB10 RNA polymerase subunit family. As to quaternary structure, part of the RNA polymerase complex. The cofactor is Zn(2+).

It localises to the cytoplasm. It carries out the reaction RNA(n) + a ribonucleoside 5'-triphosphate = RNA(n+1) + diphosphate. Its function is as follows. DNA-dependent RNA polymerase (RNAP) catalyzes the transcription of DNA into RNA using the four ribonucleoside triphosphates as substrates. This chain is DNA-directed RNA polymerase subunit Rpo10, found in Methanocorpusculum labreanum (strain ATCC 43576 / DSM 4855 / Z).